Here is a 564-residue protein sequence, read N- to C-terminus: Ribonuclease J (564 aa).

Positions 85, 87, 89, 90, 153, and 175 each coordinate Zn(2+). 375–379 contacts substrate; sequence HVSGH. Histidine 401 provides a ligand contact to Zn(2+).

Belongs to the metallo-beta-lactamase superfamily. RNA-metabolizing metallo-beta-lactamase-like family. Bacterial RNase J subfamily. As to quaternary structure, homodimer, may be a subunit of the RNA degradosome. It depends on Zn(2+) as a cofactor.

It localises to the cytoplasm. Its function is as follows. An RNase that has 5'-3' exonuclease and possibly endonuclease activity. Plays a role in 16S and 23S rRNA processing. Might have a role in mRNA maturation and/or decay. This chain is Ribonuclease J, found in Sinorhizobium meliloti (strain Sm2011 / Rm2011 / 2011).